A 92-amino-acid chain; its full sequence is YcgL domain-containing protein Sbal_1869 (92 aa).

Residues 1–85 (MLCAVYKSSR…PQVNLLAEHK (85 aa)) form the YcgL domain.

The polypeptide is YcgL domain-containing protein Sbal_1869 (Shewanella baltica (strain OS155 / ATCC BAA-1091)).